Consider the following 1240-residue polypeptide: MFCAAGGPASPGGKSAARAASGFFAPHNPRGATQTAPPPCRRQNFYNPHLAQTGTQPKAPGPAQRHTYYSECDEFRFIAPRSLDEDAPAEQRTGVHDGRLRRAPKVYCGGDERDVLRVGPEGFWPRRLRLWGGADHAPEGFDPTVTVFHVYDILEHVEHAYSMRAAQLHERFMDAITPAGTVITLLGLTPEGHRVAVHVYGTRQYFYMNKAEVDRHLQCRAPRDLCERLAAALRESPGASFRGISADHFEAEVVERADVYYYETRPTLYYRVFVRSGRALAYLCDNFCPAIRKYEGGVDATTRFILDNPGFVTFGWYRLKPGRGNAPAQPRPPTAFGTSSDVEFNCTADNLAVEGAMCDLPAYKLMCFDIECKAGGEDELAFPVAERPEDLVIQISCLLYDLSTTALEHILLFSLGSCDLPESHLSDLASRGLPAPVVLEFDSEFEMLLAFMTFVKQYGPEFVTGYNIINFDWPFVLTKLTEIYKVPLDGYGRMNGRGVFRVWDIGQSHFQKRSKIKVNGMVNIDMYGIITDKVKLSSYKLNAVAEAVLKDKKKDLSYRDIPAYYASGPAQRGVIGEYCVQDSLLVGQLFFKFLPHLELSAVARLAGINITRTIYDGQQIRVFTCLLRLAGQKGFILPDTQGRFRGLDKEAPKRPAVPRGEGERPGDGNGDEDKDDDEDGDEDGDEREEVARETGGRHVGYQGARVLDPTSGFHVDPVVVFDFASLYPSIIQAHNLCFSTLSLRPEAVAHLEADRDYLEIEVGGRRLFFVKAHVRESLLSILLRDWLAMRKQIRSRIPQSPPEEAVLLDKQQAAIKVVCNSVYGFTGVQHGLLPCLHVAATVTTIGREMLLATRAYVHARWAEFDQLLADFPEAAGMRAPGPYSMRIIYGDTDSIFVLCRGLTGEALVAMGDKMASHISRALFLPPIKLECEKTFTKLLLIAKKKYIGVICGGKMLIKGVDLVRKNNCAFINRTSRALVDLLFYDDTVSGAAAALAERPAEEWLARPLPEGLQAFGAVLVDAHRRITDPERDIQDFVLTAELSRHPRAYTNKRLAHLTVYYKLMARRAQVPSIKDRIPYVIVAQTREVEETVARLAALRELDAAAPGDEPAPPAALPSPAKRPRETPSHADPPGGASKPRKLLVSELAEDPGYAIARGVPLNTDYYFSHLLGAACVTFKALFGNNAKITESLLKRFIPETWHPPDDVAARLRAAGFGPAGAGATAEETRRMLHRAFDTLA.

Low complexity predominate over residues 1-26; sequence MFCAAGGPASPGGKSAARAASGFFAP. 3 disordered regions span residues 1–65, 646–695, and 1103–1139; these read MFCA…PAQR, GLDK…RETG, and AAAP…ASKP. Polar residues predominate over residues 44–56; the sequence is NFYNPHLAQTGTQ. Over residues 669–688 the composition is skewed to acidic residues; it reads NGDEDKDDDEDGDEDGDERE.

The protein belongs to the DNA polymerase type-B family. Forms a complex with the ssDNA-binding protein UL29, the DNA polymerase processivity factor, and the alkaline exonuclease. Interacts with the putative helicase-primase complex subunit UL8; this interaction may coordinate leading and lagging strand DNA synthesis at the replication fork.

Its subcellular location is the host nucleus. It catalyses the reaction DNA(n) + a 2'-deoxyribonucleoside 5'-triphosphate = DNA(n+1) + diphosphate. The catalysed reaction is Endonucleolytic cleavage to 5'-phosphomonoester.. Replicates viral genomic DNA. The replication complex is composed of six viral proteins: the DNA polymerase, processivity factor, primase, primase-associated factor, helicase, and ssDNA-binding protein. Additionally, the polymerase contains an intrinsic ribonuclease H (RNase H) activity that specifically degrades RNA/DNA heteroduplexes or duplex DNA substrates in the 5' to 3' direction. Therefore, it can catalyze the excision of the RNA primers that initiate the synthesis of Okazaki fragments at a replication fork during viral DNA replication. In Human herpesvirus 2 (strain 186) (HHV-2), this protein is DNA polymerase catalytic subunit.